A 137-amino-acid polypeptide reads, in one-letter code: Large-conductance mechanosensitive channel (137 aa).

A run of 2 helical transmembrane segments spans residues 10–30 (FAMRGNVVDLAVGVIIGAAFG) and 76–96 (GVFLQTVFDFVIVAFAIFMAI).

Belongs to the MscL family. Homopentamer.

It localises to the cell inner membrane. In terms of biological role, channel that opens in response to stretch forces in the membrane lipid bilayer. May participate in the regulation of osmotic pressure changes within the cell. In Erwinia tasmaniensis (strain DSM 17950 / CFBP 7177 / CIP 109463 / NCPPB 4357 / Et1/99), this protein is Large-conductance mechanosensitive channel.